The following is a 155-amino-acid chain: Ribosomal RNA large subunit methyltransferase H (155 aa).

Residues Leu-73, Gly-104, and 123–128 contribute to the S-adenosyl-L-methionine site; that span reads ISKMTF.

It belongs to the RNA methyltransferase RlmH family. Homodimer.

The protein localises to the cytoplasm. It catalyses the reaction pseudouridine(1915) in 23S rRNA + S-adenosyl-L-methionine = N(3)-methylpseudouridine(1915) in 23S rRNA + S-adenosyl-L-homocysteine + H(+). In terms of biological role, specifically methylates the pseudouridine at position 1915 (m3Psi1915) in 23S rRNA. This is Ribosomal RNA large subunit methyltransferase H from Francisella tularensis subsp. novicida (strain U112).